Reading from the N-terminus, the 279-residue chain is MNIHAATPEHSPLGKTVSYQDQYDPSLLFPIARQTKRDEIGVDEAALPFAGVDIWTGFELSWLNARGKPQIGIATFRIPAGSPRLIESKSFKLYLNSYNQTRMDGIDALAAQLARDLSAAAGAEVAVSIALPQAFAAERIAELAGECIDELDIAVDNYAPCPEILSADSTAIVSETLCSNLLKSNCLVTGQPDWGSVSIRYTGPKIDREALLRYLIGFRRHNEFHEQCVERIFVDVLRACAPTKLTVYARYTRRGGLDINPWRSNCDAAPTDNVRTARQ.

A substrate-binding site is contributed by 86–88; the sequence is IES. 88 to 89 serves as a coordination point for NADPH; the sequence is SK. C186 acts as the Thioimide intermediate in catalysis. D193 serves as the catalytic Proton donor. 225–226 is a binding site for substrate; the sequence is HE. 254–255 is a binding site for NADPH; it reads RG.

The protein belongs to the GTP cyclohydrolase I family. QueF type 2 subfamily. As to quaternary structure, homodimer.

It is found in the cytoplasm. The catalysed reaction is 7-aminomethyl-7-carbaguanine + 2 NADP(+) = 7-cyano-7-deazaguanine + 2 NADPH + 3 H(+). It functions in the pathway tRNA modification; tRNA-queuosine biosynthesis. In terms of biological role, catalyzes the NADPH-dependent reduction of 7-cyano-7-deazaguanine (preQ0) to 7-aminomethyl-7-deazaguanine (preQ1). This chain is NADPH-dependent 7-cyano-7-deazaguanine reductase, found in Chromobacterium violaceum (strain ATCC 12472 / DSM 30191 / JCM 1249 / CCUG 213 / NBRC 12614 / NCIMB 9131 / NCTC 9757 / MK).